Reading from the N-terminus, the 480-residue chain is MKVKAVRGIANPLGTIDAHGTVIESIANAGDGVDILNRHREKIGSGFVHLEGDNVILTGYVDEEQYTAEKIEETGLSVGFNANGVKAREIDGVGYYKDVTITEVSLTPLPSNKGAKVTKVREENKGEQEQMGANETQEIMKQAIEAGVKVRELEAKVEELNKEREELKKEREASIPSEKPEDAERKFMRELGSKMAEMPEQGFLREFANGADLNVVNSLGSITSKYARKSGIYDGAMKARFQGLTLAEDGVDDTFISGTFKAGTDKNKSQTATKRSLRPQMAEAYLQMDKATVRGVNDSGALSEYVMSEMVNRVIQKVEYNMILGSVDGSNGFYGLKTATDGWTKQIEYTDLFEGITDAVAECSISDAITIVMSPQTFAELRKAKGTDGHSRFNELATKEQIAQSFGAVNLETRVWMPKDEVAVYNHDEYVLIGDLNVENYNDFDLRYNVEQWLSETLVGGSIRGKNRSAYLKKKGSLGV.

Residues 138–175 (EIMKQAIEAGVKVRELEAKVEELNKEREELKKEREASI) adopt a coiled-coil conformation. Residues 163-184 (EREELKKEREASIPSEKPEDAE) are disordered.

It is found in the virion. Functionally, assembles to form a prolate capsid about 56 nm in length and 41 nm in width. The chain is Major capsid protein (l5) from Lactococcus (lactic streptococci).